Consider the following 499-residue polypeptide: Anaerobic nitric oxide reductase flavorubredoxin (499 aa).

The tract at residues 30-210 (TKGTSYNSYL…PFSALVTAKI (181 aa)) is zinc metallo-hydrolase. Residues His-79, Glu-81, Asp-83, His-147, Asp-166, and His-227 each contribute to the Fe cation site. The Flavodoxin-like domain maps to 254 to 393 (ITLFYDSMSN…LCREHGQFIA (140 aa)). Residues 260 to 264 (SMSNN) and 342 to 369 (AFGS…ETAV) each bind FMN. One can recognise a Rubredoxin-like domain in the interval 447–498 (KQCMLCTVCNWVYDPEIGEPNQGVEPNTAWIDVPDYFLCPECNLGKDVFVEV). Cys-452, Cys-455, Cys-485, and Cys-488 together coordinate Fe cation.

This sequence in the N-terminal section; belongs to the zinc metallo-hydrolase group 3 family. Homotetramer. Requires Fe cation as cofactor. FMN serves as cofactor.

The protein localises to the cytoplasm. The protein operates within nitrogen metabolism; nitric oxide reduction. Its function is as follows. Anaerobic nitric oxide reductase; uses NADH to detoxify nitric oxide (NO), protecting several 4Fe-4S NO-sensitive enzymes. Has at least 2 reductase partners, only one of which (NorW, flavorubredoxin reductase) has been identified. NO probably binds to the di-iron center; electrons enter from the NorW at rubredoxin and are transferred sequentially to the FMN center and the di-iron center. Also able to function as an aerobic oxygen reductase. This Aliivibrio salmonicida (strain LFI1238) (Vibrio salmonicida (strain LFI1238)) protein is Anaerobic nitric oxide reductase flavorubredoxin.